The sequence spans 193 residues: Putative zinc finger protein 726P1 (193 aa).

The segment at 18–40 adopts a C2H2-type 1; degenerate zinc-finger fold; that stretch reads YKCKKCGKTFNWSSILTNNKKIH. The C2H2-type 2; atypical zinc-finger motif lies at 46–68; that stretch reads YKCEECGKAFKQHSTLTTHKIIC. Residues 74–96 form a C2H2-type 3; degenerate zinc finger; the sequence is YRCEECGKAFCQPSTLTRYKRMH. The segment at 102 to 124 adopts a C2H2-type 4 zinc-finger fold; that stretch reads YKCEECGKAFTQFSTLTKHKRIH. The segment at 130 to 152 adopts a C2H2-type 5; degenerate zinc-finger fold; it reads YKCEESGKAFIWSSGLTEHRRVH. A C2H2-type 6 zinc finger spans residues 158-180; sequence YKCEECGKALIQFSTLTRHKRIH.

The polypeptide is Putative zinc finger protein 726P1 (ZNF726P1) (Homo sapiens (Human)).